We begin with the raw amino-acid sequence, 216 residues long: Pyrophosphatase PpaX (216 aa).

Asp9 functions as the Nucleophile in the catalytic mechanism.

It belongs to the HAD-like hydrolase superfamily. PpaX family. It depends on Mg(2+) as a cofactor.

The catalysed reaction is diphosphate + H2O = 2 phosphate + H(+). Functionally, hydrolyzes pyrophosphate formed during P-Ser-HPr dephosphorylation by HPrK/P. Might play a role in controlling the intracellular pyrophosphate pool. The sequence is that of Pyrophosphatase PpaX from Bacillus anthracis (strain A0248).